The chain runs to 369 residues: Alanine racemase (369 aa).

Lysine 35 acts as the Proton acceptor; specific for D-alanine in catalysis. Lysine 35 bears the N6-(pyridoxal phosphate)lysine mark. Arginine 130 contacts substrate. The active-site Proton acceptor; specific for L-alanine is tyrosine 257. Methionine 305 is a binding site for substrate.

Belongs to the alanine racemase family. Requires pyridoxal 5'-phosphate as cofactor.

The enzyme catalyses L-alanine = D-alanine. It participates in amino-acid biosynthesis; D-alanine biosynthesis; D-alanine from L-alanine: step 1/1. Its function is as follows. Catalyzes the interconversion of L-alanine and D-alanine. May also act on other amino acids. This Paracidovorax citrulli (strain AAC00-1) (Acidovorax citrulli) protein is Alanine racemase (alr).